A 110-amino-acid polypeptide reads, in one-letter code: Large ribosomal subunit protein uL22 (110 aa).

The protein belongs to the universal ribosomal protein uL22 family. In terms of assembly, part of the 50S ribosomal subunit.

Functionally, this protein binds specifically to 23S rRNA; its binding is stimulated by other ribosomal proteins, e.g. L4, L17, and L20. It is important during the early stages of 50S assembly. It makes multiple contacts with different domains of the 23S rRNA in the assembled 50S subunit and ribosome. Its function is as follows. The globular domain of the protein is located near the polypeptide exit tunnel on the outside of the subunit, while an extended beta-hairpin is found that lines the wall of the exit tunnel in the center of the 70S ribosome. The chain is Large ribosomal subunit protein uL22 from Ruthia magnifica subsp. Calyptogena magnifica.